Reading from the N-terminus, the 246-residue chain is Trypsin-5 (246 aa).

The N-terminal stretch at 1–15 is a signal peptide; sequence MNSLLFLALVGAAVA. Residues 16–23 constitute a propeptide, activation peptide; the sequence is FPVDDDDK. Positions 24-244 constitute a Peptidase S1 domain; sequence IVGGYTCREN…YVDWIQDTIA (221 aa). Cys48 and Cys64 are joined by a disulfide. Catalysis depends on charge relay system residues His63 and Asp107. 3 cysteine pairs are disulfide-bonded: Cys139-Cys206, Cys171-Cys185, and Cys196-Cys220. Residue Ser200 is the Charge relay system of the active site.

It belongs to the peptidase S1 family. Proteolytically cleaved and activated by an autocatalytic mechanism. Cleavage by CTRC inhibits autoactivation. In terms of tissue distribution, expressed in the heart, lung, brain, kidney, liver, epididymis, ovary and uterus. Expression in the testis is limited to round and elongating spermatids.

The protein localises to the cytoplasmic vesicle. It is found in the secretory vesicle. It localises to the acrosome. The catalysed reaction is Preferential cleavage: Arg-|-Xaa, Lys-|-Xaa.. With respect to regulation, activated by autocatalytic cleavage. Cleavage by CTRC inhibits autoactivation. Functionally, serine protease capable of autoactivation. The chain is Trypsin-5 from Mus musculus (Mouse).